Consider the following 337-residue polypeptide: Nucleotide sugar transporter SLC35D2 (337 aa).

At 1–27 (MTAGGQAEAEGAGGEPGAARLPSRVAR) the chain is on the cytoplasmic side. The helical transmembrane segment at 28–48 (LLSALFYGTCSFLIVLVNKAL) threads the bilayer. Residues 49–53 (LTTYG) lie on the Extracellular side of the membrane. The chain crosses the membrane as a helical span at residues 54-74 (FPSPIFLGIGQMAATIMILYV). Residues 75 to 146 (SKLNKIIHFP…IILGKQYSLN (72 aa)) lie on the Cytoplasmic side of the membrane. The next 2 membrane-spanning stretches (helical) occupy residues 147–167 (IILS…SDLA) and 168–188 (FNLE…ANGV). Topologically, residues 189-201 (YTKQKMDPKELGK) are cytoplasmic. Residues 202 to 222 (YGVLFYNACFMIIPTLIISVS) traverse the membrane as a helical segment. Residues 223-237 (TGDLQQATEFNQWKN) are Extracellular-facing. A helical membrane pass occupies residues 238-258 (VVFILQFLLSCFLGFLLMYST). Residues 259–265 (VLCSYYN) lie on the Cytoplasmic side of the membrane. A helical transmembrane segment spans residues 266–288 (SALTTAVVGAIKNVSVAYIGILI). At 289-292 (GGDY) the chain is on the extracellular side. A helical membrane pass occupies residues 293–315 (IFSLLNFVGLNICMAGGLRYSFL). Residues 316–337 (TLSSQLKPKPVGEENICLDLKS) lie on the Cytoplasmic side of the membrane.

It belongs to the TPT transporter family. SLC35D subfamily. Highly expressed in heart, kidney, small intestine, placenta, lung and peripheral blood leukocyte. Weakly expressed in skeletal muscle and spleen. Not expressed in brain, colon and thymus.

It is found in the golgi apparatus membrane. It carries out the reaction UMP(out) + UDP-N-acetyl-alpha-D-glucosamine(in) = UMP(in) + UDP-N-acetyl-alpha-D-glucosamine(out). The catalysed reaction is UMP(out) + UDP-alpha-D-glucose(in) = UMP(in) + UDP-alpha-D-glucose(out). Functionally, nucleotide sugar antiporter transporting UDP-N-acetylglucosamine (UDP-GlcNAc) and UDP-glucose (UDP-Glc) from the cytosol into the lumen of the Golgi in exchange of UMP. By supplying UDP-N-acetylglucosamine, a donor substrate to heparan sulfate synthases, probably takes part in the synthesis of these glycoconjugates. This chain is Nucleotide sugar transporter SLC35D2, found in Homo sapiens (Human).